The chain runs to 308 residues: Quinolinate synthase (308 aa).

His24 and Ser41 together coordinate iminosuccinate. Cys86 contacts [4Fe-4S] cluster. Residues 112 to 114 and Ser129 each bind iminosuccinate; that span reads YIN. Cys172 contacts [4Fe-4S] cluster. Iminosuccinate contacts are provided by residues 198-200 and Thr215; that span reads HPE. Cys265 lines the [4Fe-4S] cluster pocket.

This sequence belongs to the quinolinate synthase family. Type 2 subfamily. [4Fe-4S] cluster serves as cofactor.

Its subcellular location is the cytoplasm. It catalyses the reaction iminosuccinate + dihydroxyacetone phosphate = quinolinate + phosphate + 2 H2O + H(+). It functions in the pathway cofactor biosynthesis; NAD(+) biosynthesis; quinolinate from iminoaspartate: step 1/1. Functionally, catalyzes the condensation of iminoaspartate with dihydroxyacetone phosphate to form quinolinate. This Sulfurihydrogenibium sp. (strain YO3AOP1) protein is Quinolinate synthase.